Consider the following 475-residue polypeptide: SAM50-like protein SPAC17C9.06 (475 aa).

The region spanning 44-130 (VGISSIRVTG…LDVTIQVKEK (87 aa)) is the POTRA domain.

This sequence belongs to the SAM50/omp85 family. In terms of assembly, associates with the mitochondrial contact site and cristae organizing system (MICOS) complex (also known as MINOS or MitOS complex).

The protein localises to the mitochondrion outer membrane. Functionally, may be required for the assembly pathway of mitochondrial outer membrane proteins. This Schizosaccharomyces pombe (strain 972 / ATCC 24843) (Fission yeast) protein is SAM50-like protein SPAC17C9.06.